The primary structure comprises 258 residues: MVLIRVLANLLILQLSYAQKSSELIIGGHPCNINEHRSLVVLFNSSGLLCSGTLINKEWVLTAAHCDSNNFQLLFGVHSKKVLNEDEQTRDPKEKFICPNKKKDDEKDKDIMLIRLDSSVSNSEHIAPLSLPSSPPSVGSACRVMGWGKTIPTKDTYPDVPHCANINILDHAVCRAAYSNLLEKSKTLCAGILQGGKDTCQFDSGGPLICNGQVQGIVSWGGHPCGQPHALGVYTNVFNYTDWIQSIIAGNTDATCPP.

Residues 1–18 (MVLIRVLANLLILQLSYA) form the signal peptide. Residues 19–24 (QKSSEL) constitute a propeptide that is removed on maturation. Positions 25–249 (IIGGHPCNIN…YTDWIQSIIA (225 aa)) constitute a Peptidase S1 domain. 6 cysteine pairs are disulfide-bonded: Cys-31-Cys-163, Cys-50-Cys-66, Cys-98-Cys-256, Cys-142-Cys-210, Cys-174-Cys-189, and Cys-200-Cys-225. Asn-44 is a glycosylation site (N-linked (GlcNAc...) asparagine). Catalysis depends on charge relay system residues His-65 and Asp-110. Catalysis depends on Ser-204, which acts as the Charge relay system. The N-linked (GlcNAc...) asparagine glycan is linked to Asn-239.

This sequence belongs to the peptidase S1 family. Snake venom subfamily. In terms of assembly, monomer. In terms of tissue distribution, expressed by the venom gland.

Its subcellular location is the secreted. Functionally, snake venom serine protease that may act in the hemostasis system of the prey. The chain is Snake venom serine protease 3 from Protobothrops jerdonii (Jerdon's pitviper).